The chain runs to 153 residues: Large ribosomal subunit protein uL13 (153 aa).

Belongs to the universal ribosomal protein uL13 family. In terms of assembly, part of the 50S ribosomal subunit.

This protein is one of the early assembly proteins of the 50S ribosomal subunit, although it is not seen to bind rRNA by itself. It is important during the early stages of 50S assembly. The protein is Large ribosomal subunit protein uL13 of Methylobacterium sp. (strain 4-46).